We begin with the raw amino-acid sequence, 224 residues long: Ribonuclease 3 (224 aa).

The 124-residue stretch at 4 to 127 folds into the RNase III domain; the sequence is IEKLEQSLTY…IIGAIHLEAG (124 aa). Glu40 lines the Mg(2+) pocket. The active site involves Asp44. Asp113 and Glu116 together coordinate Mg(2+). The active site involves Glu116. The 70-residue stretch at 154 to 223 folds into the DRBM domain; sequence DYKTKLQEIT…AKIALEKLGA (70 aa).

The protein belongs to the ribonuclease III family. As to quaternary structure, homodimer. Requires Mg(2+) as cofactor.

It is found in the cytoplasm. The catalysed reaction is Endonucleolytic cleavage to 5'-phosphomonoester.. Its function is as follows. Digests double-stranded RNA. Involved in the processing of primary rRNA transcript to yield the immediate precursors to the large and small rRNAs (23S and 16S). Processes some mRNAs, and tRNAs when they are encoded in the rRNA operon. Processes pre-crRNA and tracrRNA of type II CRISPR loci if present in the organism. In Campylobacter jejuni subsp. jejuni serotype O:6 (strain 81116 / NCTC 11828), this protein is Ribonuclease 3.